We begin with the raw amino-acid sequence, 392 residues long: Stilbene synthase 2 (392 aa).

Residue 55-58 participates in substrate binding; the sequence is KFNR. Cysteine 164 is a catalytic residue. Substrate contacts are provided by residues leucine 267 and 305 to 307; that span reads GGP.

Belongs to the thiolase-like superfamily. Chalcone/stilbene synthases family. As to quaternary structure, homodimer.

The protein resides in the cytoplasm. It carries out the reaction 4-coumaroyl-CoA + 3 malonyl-CoA + 3 H(+) = trans-resveratrol + 4 CO2 + 4 CoA. It participates in phytoalexin biosynthesis; 3,4',5-trihydroxystilbene biosynthesis; 3,4',5-trihydroxystilbene from trans-4-coumarate: step 2/2. Mediates resistance to pathogens which are sensitive to stilbenes. This Vitis vinifera (Grape) protein is Stilbene synthase 2.